The chain runs to 670 residues: Beta-fructofuranosidase 1 (670 aa).

The tract at residues 1-40 (MIPAVADPTTLDGGGARRPLLPETDPRGRAAAGAEQKRPP) is disordered. Residues 1–44 (MIPAVADPTTLDGGGARRPLLPETDPRGRAAAGAEQKRPPATPT) lie on the Cytoplasmic side of the membrane. The propeptide at 1 to 112 (MIPAVADPTT…APLLGSGALQ (112 aa)) is removed in mature form. The helical; Signal-anchor for type II membrane protein transmembrane segment at 45-65 (VLTAVVSAVLLLVLVAVTVLA) threads the bilayer. Residues 66-670 (SQHVDGQAGG…RPYPATTTSL (605 aa)) lie on the Lumenal side of the membrane. Substrate contacts are provided by residues 136–139 (WMND), Q155, and W163. Residue D139 is part of the active site. The N-linked (GlcNAc...) asparagine glycan is linked to N165. Residues 198–199 (WS) and 263–264 (RD) contribute to the substrate site. N-linked (GlcNAc...) asparagine glycosylation occurs at N275. Substrate contacts are provided by E322 and D362. N518 carries N-linked (GlcNAc...) asparagine glycosylation. C519 and C567 are oxidised to a cystine. N595 and N639 each carry an N-linked (GlcNAc...) asparagine glycan.

Belongs to the glycosyl hydrolase 32 family. May be present in two forms, a 70 kDa monomer and a heterodimer of the 30 kDa and 38 kDa subunits. The ratio of the levels of the two forms within cells appears to be regulated developmentally.

It is found in the membrane. The protein resides in the vacuole lumen. It catalyses the reaction Hydrolysis of terminal non-reducing beta-D-fructofuranoside residues in beta-D-fructofuranosides.. Its pathway is glycan biosynthesis; sucrose metabolism. The protein is Beta-fructofuranosidase 1 (IVR1) of Zea mays (Maize).